The sequence spans 359 residues: 3-dehydroquinate synthase (359 aa).

Residues 71 to 76 (DAEAAK), 105 to 109 (GAVTD), 129 to 130 (TT), Lys142, and Lys151 each bind NAD(+). Residues Glu184, His247, and His263 each coordinate Zn(2+).

It belongs to the sugar phosphate cyclases superfamily. Dehydroquinate synthase family. The cofactor is NAD(+). Requires Co(2+) as cofactor. It depends on Zn(2+) as a cofactor.

Its subcellular location is the cytoplasm. The catalysed reaction is 7-phospho-2-dehydro-3-deoxy-D-arabino-heptonate = 3-dehydroquinate + phosphate. It participates in metabolic intermediate biosynthesis; chorismate biosynthesis; chorismate from D-erythrose 4-phosphate and phosphoenolpyruvate: step 2/7. In terms of biological role, catalyzes the conversion of 3-deoxy-D-arabino-heptulosonate 7-phosphate (DAHP) to dehydroquinate (DHQ). The polypeptide is 3-dehydroquinate synthase (Leifsonia xyli subsp. xyli (strain CTCB07)).